A 242-amino-acid polypeptide reads, in one-letter code: Ras-like protein family member 11A (242 aa).

A small GTPase-like region spans residues 17–241 (ESSSDYLLPK…SSKAKAASTL (225 aa)). Residues 34–41 (GASCVGKS), 81–85 (DTPGG), and 147–150 (NKGD) contribute to the GTP site.

It belongs to the small GTPase superfamily. Ras family. Interacts with UBF/UBTF.

It localises to the nucleus. The protein resides in the nucleolus. It catalyses the reaction GTP + H2O = GDP + phosphate + H(+). Its function is as follows. Regulator of rDNA transcription. Acts in cooperation UBF/UBTF and positively regulates RNA polymerase I transcription. This chain is Ras-like protein family member 11A, found in Rattus norvegicus (Rat).